The chain runs to 532 residues: Protein PTST homolog 2, chloroplastic (532 aa).

The transit peptide at 1 to 71 directs the protein to the chloroplast; that stretch reads MVSINSGPIS…KPRKKSCCSR (71 aa). Disordered regions lie at residues 165–201, 256–292, 314–347, and 367–388; these read QLPN…SRND, EVDG…SETW, SSGL…EDVN, and HSLR…TAGN. The segment covering 173–183 has biased composition (basic and acidic residues); it reads EMDKTLNHGDL. The span at 320–339 shows a compositional bias: basic and acidic residues; it reads VKKDDTKKDSGDSMNGKDRI. Residues 389–454 are a coiled coil; sequence LENLSDDWEY…ASRALRLLRT (66 aa).

As to quaternary structure, interacts with PTST3 and SS4. Interacts with MFP1; the interaction is essential for the initiation of starch granules biosynthesis in leaf chloroplasts, for the correct location of the process in the stromal spaces between the thylakoid membranes, and for the association of this protein with the thylakoid membranes. Interacts with PII1/MRC; the interaction is essential for the initiation of starch granules biosynthesis in leaf chloroplasts.

The protein resides in the plastid. Its subcellular location is the chloroplast. It is found in the chloroplast thylakoid membrane. Functionally, involved in starch granule initiation in leaf chloroplasts. Binds and delivers suitable maltooligosaccharide substrates to starch synthase 4 (SS4). The sequence is that of Protein PTST homolog 2, chloroplastic from Arabidopsis thaliana (Mouse-ear cress).